A 1206-amino-acid polypeptide reads, in one-letter code: Phosphoglucan, water dikinase, chloroplastic (1206 aa).

2 disordered regions span residues 1–20 and 52–71; these read MTSL…PRRG and RSAA…DSSK. The N-terminal 56 residues, 1 to 56, are a transit peptide targeting the chloroplast; that stretch reads MTSLRPLETSLSIGGRPRRGLVLPPPGVGAGVLLRRGAMALPGRRGFACRGRSAAS. In terms of domain architecture, CBM20 spans 67 to 168; the sequence is RDSSKQPLVH…KFDIVCHWNR (102 aa). His776 serves as the catalytic Tele-phosphohistidine intermediate.

The protein belongs to the PEP-utilizing enzyme family. Homodimer. It depends on Mg(2+) as a cofactor.

The protein resides in the plastid. It is found in the chloroplast. It catalyses the reaction [(1-&gt;4)-6-phospho-alpha-D-glucosyl](n) + n ATP + n H2O = [(1-&gt;4)-3,6-bisphospho-alpha-D-glucosyl](n) + n AMP + n phosphate + 2n H(+). Functionally, mediates the incorporation of phosphate into starch-like phospho-alpha-glucan, mostly at the C-3 position of glucose units. May be required for starch degradation, suggesting that the phosphate content of starch regulates its degradability. The chain is Phosphoglucan, water dikinase, chloroplastic (GWD3) from Oryza sativa subsp. japonica (Rice).